Here is a 328-residue protein sequence, read N- to C-terminus: DNA-directed RNA polymerase subunit alpha (328 aa).

Residues 1 to 234 (MVREKVKVST…DLFIPFLQAE (234 aa)) form an alpha N-terminal domain (alpha-NTD) region. Residues 268-328 (IALKSIFIDQ…KQIMSILEKK (61 aa)) are alpha C-terminal domain (alpha-CTD).

It belongs to the RNA polymerase alpha chain family. In plastids the minimal PEP RNA polymerase catalytic core is composed of four subunits: alpha, beta, beta', and beta''. When a (nuclear-encoded) sigma factor is associated with the core the holoenzyme is formed, which can initiate transcription.

It is found in the plastid. The protein resides in the chloroplast. The catalysed reaction is RNA(n) + a ribonucleoside 5'-triphosphate = RNA(n+1) + diphosphate. In terms of biological role, DNA-dependent RNA polymerase catalyzes the transcription of DNA into RNA using the four ribonucleoside triphosphates as substrates. This Citrus sinensis (Sweet orange) protein is DNA-directed RNA polymerase subunit alpha.